The following is a 647-amino-acid chain: Threonine--tRNA ligase (647 aa).

The TGS domain occupies 1-61 (MINITFPDGA…TEDGSIEIVT (61 aa)). Residues 242 to 540 (DHRKLGKELD…LIENYKGAFP (299 aa)) are catalytic. Cysteine 336, histidine 387, and histidine 517 together coordinate Zn(2+).

The protein belongs to the class-II aminoacyl-tRNA synthetase family. In terms of assembly, homodimer. Zn(2+) serves as cofactor.

It localises to the cytoplasm. It catalyses the reaction tRNA(Thr) + L-threonine + ATP = L-threonyl-tRNA(Thr) + AMP + diphosphate + H(+). Functionally, catalyzes the attachment of threonine to tRNA(Thr) in a two-step reaction: L-threonine is first activated by ATP to form Thr-AMP and then transferred to the acceptor end of tRNA(Thr). Also edits incorrectly charged L-seryl-tRNA(Thr). The sequence is that of Threonine--tRNA ligase from Streptococcus pneumoniae (strain JJA).